The following is a 275-amino-acid chain: S-formylglutathione hydrolase (275 aa).

Residues Ser-145, Asp-221, and His-254 each act as charge relay system in the active site.

Belongs to the esterase D family.

The catalysed reaction is S-formylglutathione + H2O = formate + glutathione + H(+). Functionally, serine hydrolase involved in the detoxification of formaldehyde. Hydrolyzes S-formylglutathione to glutathione and formate. The chain is S-formylglutathione hydrolase from Haemophilus influenzae (strain ATCC 51907 / DSM 11121 / KW20 / Rd).